Here is a 118-residue protein sequence, read N- to C-terminus: Galanin peptides (118 aa).

Residues 1–19 form the signal peptide; it reads MHRCVGGVCVSLIVCAFLT. Positions 20-30 are excised as a propeptide; that stretch reads ETLGMVIAAKE. Ala-61 carries the alanine amide modification.

Belongs to the galanin family. Strongly expressed in brain and stomach, moderately in the eye, and very weakly in heart, kidney and gills. Not detected in liver.

The protein resides in the secreted. Its function is as follows. Endocrine hormone of the central and peripheral nervous systems that binds and activates the G protein-coupled receptors GALR1 (galr1a and galr1b) and GALR2 (galr2a and galr2b). This small neuropeptide may regulate diverse physiologic functions including contraction of smooth muscle of the gastrointestinal and genitourinary tract, growth hormone and insulin release and adrenal secretion. This Danio rerio (Zebrafish) protein is Galanin peptides.